The primary structure comprises 230 residues: MADS-box transcription factor 50 (230 aa).

The region spanning 1 to 61 (MVRGKTQMKR…GKLYEFASAS (61 aa)) is the MADS-box domain. In terms of domain architecture, K-box spans 86–176 (IEQVKADADG…REKCKNQPPL (91 aa)). The disordered stretch occupies residues 209–230 (GLPGRSRSSGGAAEDSQAMPHS).

Expressed in mature leaves and at low levels in roots and young panicles.

The protein localises to the nucleus. In terms of biological role, probable transcription factor active in flowering time control. May control internode elongation and promote floral transition phase. May act upstream of the floral regulators MADS1, MADS14, MADS15 and MADS18 in the floral induction pathway. This is MADS-box transcription factor 50 (MADS50) from Oryza sativa subsp. japonica (Rice).